Consider the following 158-residue polypeptide: Cyclic pyranopterin monophosphate synthase (158 aa).

Residues 76 to 78 and 114 to 115 contribute to the substrate site; these read LCH and ME. The active site involves Asp-129.

This sequence belongs to the MoaC family. Homohexamer; trimer of dimers.

It carries out the reaction (8S)-3',8-cyclo-7,8-dihydroguanosine 5'-triphosphate = cyclic pyranopterin phosphate + diphosphate. The protein operates within cofactor biosynthesis; molybdopterin biosynthesis. Its function is as follows. Catalyzes the conversion of (8S)-3',8-cyclo-7,8-dihydroguanosine 5'-triphosphate to cyclic pyranopterin monophosphate (cPMP). The chain is Cyclic pyranopterin monophosphate synthase from Shewanella halifaxensis (strain HAW-EB4).